The following is a 132-amino-acid chain: Small ribosomal subunit protein uS8 (132 aa).

It belongs to the universal ribosomal protein uS8 family. Part of the 30S ribosomal subunit. Contacts proteins S5 and S12.

Its function is as follows. One of the primary rRNA binding proteins, it binds directly to 16S rRNA central domain where it helps coordinate assembly of the platform of the 30S subunit. In Lactococcus lactis subsp. lactis (strain IL1403) (Streptococcus lactis), this protein is Small ribosomal subunit protein uS8.